The sequence spans 343 residues: Putative KilA-N domain-containing protein R904 (343 aa).

In terms of domain architecture, KilA-N spans Glu51–Tyr157. Residues Ala159–Tyr279 adopt a coiled-coil conformation.

This chain is Putative KilA-N domain-containing protein R904, found in Acanthamoeba polyphaga mimivirus (APMV).